A 233-amino-acid polypeptide reads, in one-letter code: UPF0502 protein Mpe_A1449 (233 aa).

It belongs to the UPF0502 family.

The protein is UPF0502 protein Mpe_A1449 of Methylibium petroleiphilum (strain ATCC BAA-1232 / LMG 22953 / PM1).